We begin with the raw amino-acid sequence, 649 residues long: Choline transporter-like protein 3 (649 aa).

A helical membrane pass occupies residues 33-53 (AWLFLFFLFWTGLVFIMGYSV). Asn136 and Asn151 each carry an N-linked (GlcNAc...) asparagine glycan. Transmembrane regions (helical) follow at residues 213 to 233 (DTVL…MFTF), 235 to 255 (FITT…LLFV), 284 to 304 (LLGF…LIYV), 334 to 354 (LWTF…LLSL), and 384 to 404 (LIGL…AVAG). N-linked (GlcNAc...) asparagine glycans are attached at residues Asn414, Asn502, and Asn520. The next 2 membrane-spanning stretches (helical) occupy residues 533–553 (FIIF…GLMA) and 562–582 (VWAV…HSFL).

It belongs to the CTL (choline transporter-like) family.

Its subcellular location is the membrane. This is Choline transporter-like protein 3 (SLC44A3) from Bos taurus (Bovine).